The chain runs to 151 residues: MFGMSLPEIIIIAVIAVIFLGPDKLPDAMVKIAKFFKLFKQTVNSAKSTFEQEVKIAELKEDAKKYKENITNAASSVRKKLTFEELDELKSTVSGTKNSINESLADIKKEITKDPLTLLNNDPLNNETLNEQPSKPSPNLNLENKEIKKEA.

A helical membrane pass occupies residues methionine 1–glycine 21. A compositionally biased stretch (low complexity) spans asparagine 120 to glutamate 131. Positions asparagine 120–alanine 151 are disordered. Positions glutamine 132–leucine 142 are enriched in polar residues.

The protein belongs to the TatB family. In terms of assembly, the Tat system comprises two distinct complexes: a TatABC complex, containing multiple copies of TatA, TatB and TatC subunits, and a separate TatA complex, containing only TatA subunits. Substrates initially bind to the TatABC complex, which probably triggers association of the separate TatA complex to form the active translocon.

The protein resides in the cell inner membrane. In terms of biological role, part of the twin-arginine translocation (Tat) system that transports large folded proteins containing a characteristic twin-arginine motif in their signal peptide across membranes. Together with TatC, TatB is part of a receptor directly interacting with Tat signal peptides. TatB may form an oligomeric binding site that transiently accommodates folded Tat precursor proteins before their translocation. This chain is Sec-independent protein translocase protein TatB, found in Campylobacter fetus subsp. fetus (strain 82-40).